The primary structure comprises 299 residues: Fibrinogen silencer-binding protein (299 aa).

Residue K94 forms a Glycyl lysine isopeptide (Lys-Gly) (interchain with G-Cter in SUMO2) linkage. The tract at residues 189 to 211 (EGSESPSLSSVDMRMTSSPSSVP) is disordered. The span at 192–209 (ESPSLSSVDMRMTSSPSS) shows a compositional bias: polar residues.

Interacts with APBA1 (via PDZ 1 and 2 domains).

The protein localises to the nucleus. Its function is as follows. Transcriptional repressor that down-regulates the expression of the fibrinogen gamma chain. Represses transcription of GSK3B gene promoter via its interaction with APBA1. The chain is Fibrinogen silencer-binding protein (Fsbp) from Mus musculus (Mouse).